The following is a 745-amino-acid chain: Fatty acid oxidation complex subunit alpha (745 aa).

The segment at 47-209 is enoyl-CoA hydratase; the sequence is VNTLKAKFAE…KMGLVDDVVP (163 aa). Positions 325–745 are 3-hydroxyacyl-CoA dehydrogenase; it reads RAIHRVGVLG…LDEAAITAHN (421 aa).

It in the N-terminal section; belongs to the enoyl-CoA hydratase/isomerase family. In the central section; belongs to the 3-hydroxyacyl-CoA dehydrogenase family. In terms of assembly, heterotetramer of two alpha chains (FadJ) and two beta chains (FadI).

Its subcellular location is the cytoplasm. The catalysed reaction is a (3S)-3-hydroxyacyl-CoA = a (2E)-enoyl-CoA + H2O. It carries out the reaction a 4-saturated-(3S)-3-hydroxyacyl-CoA = a (3E)-enoyl-CoA + H2O. The enzyme catalyses a (3S)-3-hydroxyacyl-CoA + NAD(+) = a 3-oxoacyl-CoA + NADH + H(+). It catalyses the reaction (3S)-3-hydroxybutanoyl-CoA = (3R)-3-hydroxybutanoyl-CoA. The protein operates within lipid metabolism; fatty acid beta-oxidation. Functionally, catalyzes the formation of a hydroxyacyl-CoA by addition of water on enoyl-CoA. Also exhibits 3-hydroxyacyl-CoA epimerase and 3-hydroxyacyl-CoA dehydrogenase activities. This chain is Fatty acid oxidation complex subunit alpha, found in Yersinia enterocolitica serotype O:8 / biotype 1B (strain NCTC 13174 / 8081).